The primary structure comprises 290 residues: 30 kDa spicule matrix protein alpha (290 aa).

An N-terminal signal peptide occupies residues 1–20 (MRGFVYVLVCVLALASFSRA). The 71-residue stretch at 92–162 (ANMYCGQMHP…YTNWERMTAP (71 aa)) folds into the C-type lectin domain. Residue asparagine 102 is glycosylated (N-linked (GlcNAc...) asparagine).

Accumulates exclusively in mineralized tissues.

Matrix protein of the sea urchin embryo spicule. The function of the matrix proteins is to direct crystal growth in certain orientations and inhibit growth in others. The chain is 30 kDa spicule matrix protein alpha (SM30A) from Strongylocentrotus purpuratus (Purple sea urchin).